We begin with the raw amino-acid sequence, 431 residues long: Histidinol dehydrogenase (431 aa).

3 residues coordinate NAD(+): Tyr-127, Gln-189, and Asn-212. Substrate contacts are provided by Ser-237, Gln-259, and His-262. Positions 259 and 262 each coordinate Zn(2+). Residues Glu-326 and His-327 each act as proton acceptor in the active site. Positions 327, 360, 414, and 419 each coordinate substrate. Asp-360 contacts Zn(2+). His-419 provides a ligand contact to Zn(2+).

The protein belongs to the histidinol dehydrogenase family. The cofactor is Zn(2+).

It carries out the reaction L-histidinol + 2 NAD(+) + H2O = L-histidine + 2 NADH + 3 H(+). Its pathway is amino-acid biosynthesis; L-histidine biosynthesis; L-histidine from 5-phospho-alpha-D-ribose 1-diphosphate: step 9/9. Catalyzes the sequential NAD-dependent oxidations of L-histidinol to L-histidinaldehyde and then to L-histidine. The protein is Histidinol dehydrogenase of Xanthomonas campestris pv. campestris (strain ATCC 33913 / DSM 3586 / NCPPB 528 / LMG 568 / P 25).